We begin with the raw amino-acid sequence, 235 residues long: Urease accessory protein UreF (235 aa).

This sequence belongs to the UreF family. As to quaternary structure, ureD, UreF and UreG form a complex that acts as a GTP-hydrolysis-dependent molecular chaperone, activating the urease apoprotein by helping to assemble the nickel containing metallocenter of UreC. The UreE protein probably delivers the nickel.

The protein resides in the cytoplasm. In terms of biological role, required for maturation of urease via the functional incorporation of the urease nickel metallocenter. This is Urease accessory protein UreF from Pseudoalteromonas translucida (strain TAC 125).